The following is an 88-amino-acid chain: Small ribosomal subunit protein bS16 (88 aa).

The protein belongs to the bacterial ribosomal protein bS16 family.

In Geobacter sulfurreducens (strain ATCC 51573 / DSM 12127 / PCA), this protein is Small ribosomal subunit protein bS16.